A 160-amino-acid chain; its full sequence is Serine-protein kinase RsbW (160 aa).

This sequence belongs to the anti-sigma-factor family.

It carries out the reaction L-seryl-[protein] + ATP = O-phospho-L-seryl-[protein] + ADP + H(+). It catalyses the reaction L-threonyl-[protein] + ATP = O-phospho-L-threonyl-[protein] + ADP + H(+). Its function is as follows. Negative regulator of sigma-B activity. Phosphorylates and inactivates its specific antagonist protein, RsbV. Upon phosphorylation of RsbV, RsbW is released and binds to sigma-B, thereby blocking its ability to form an RNA polymerase holoenzyme (E-sigma-B). This is Serine-protein kinase RsbW from Bacillus velezensis (strain DSM 23117 / BGSC 10A6 / LMG 26770 / FZB42) (Bacillus amyloliquefaciens subsp. plantarum).